We begin with the raw amino-acid sequence, 211 residues long: Histidine biosynthesis bifunctional protein HisIE (211 aa).

A phosphoribosyl-AMP cyclohydrolase region spans residues 1–122 (MSVKAAEVSS…DPQEESQMVW (122 aa)). Residues 123–211 (LHQLEQLLAA…VINKLKERHK (89 aa)) form a phosphoribosyl-ATP pyrophosphohydrolase region.

The protein in the N-terminal section; belongs to the PRA-CH family. In the C-terminal section; belongs to the PRA-PH family.

The protein resides in the cytoplasm. It catalyses the reaction 1-(5-phospho-beta-D-ribosyl)-ATP + H2O = 1-(5-phospho-beta-D-ribosyl)-5'-AMP + diphosphate + H(+). It carries out the reaction 1-(5-phospho-beta-D-ribosyl)-5'-AMP + H2O = 1-(5-phospho-beta-D-ribosyl)-5-[(5-phospho-beta-D-ribosylamino)methylideneamino]imidazole-4-carboxamide. Its pathway is amino-acid biosynthesis; L-histidine biosynthesis; L-histidine from 5-phospho-alpha-D-ribose 1-diphosphate: step 2/9. It participates in amino-acid biosynthesis; L-histidine biosynthesis; L-histidine from 5-phospho-alpha-D-ribose 1-diphosphate: step 3/9. This Vibrio vulnificus (strain YJ016) protein is Histidine biosynthesis bifunctional protein HisIE.